Consider the following 83-residue polypeptide: Toxin BmKBT (83 aa).

Residues methionine 1–threonine 19 form the signal peptide. The 61-residue stretch at lysine 21 to arginine 81 folds into the LCN-type CS-alpha/beta domain. 4 cysteine pairs are disulfide-bonded: cysteine 31–cysteine 80, cysteine 35–cysteine 54, cysteine 41–cysteine 61, and cysteine 45–cysteine 63. Residue lysine 83 is a propeptide, removed by a carboxypeptidase.

Belongs to the long (4 C-C) scorpion toxin superfamily. Sodium channel inhibitor family. Beta subfamily. As to expression, expressed by the venom gland.

It localises to the secreted. Functionally, this toxin increases the peak sodium current, slows down the inactivation of sodium channels (Nav), and prolongs the action potential of dorsal root ganglion neurons, which indicates that it behaves as a classical alpha-toxin. It binds to mammal brain and insect sodium channels, but with a different manner. This peptide may bind to a distinct receptor site on mammal brain sodium channels, which is unconnected with that for BmKAS (a beta-toxin), BmKIT2 (a beta-toxin) or BmK I (an alpha toxin). In contrast, the receptor site for BmKabT on insect sodium channels might be closely related to that for the beta-insect depressant toxin BmKIT2. Possesses potent toxicity in mice but induces only paralysis in cotton bollworm. This is Toxin BmKBT from Olivierus martensii (Manchurian scorpion).